A 289-amino-acid chain; its full sequence is 4-diphosphocytidyl-2-C-methyl-D-erythritol kinase (289 aa).

Lysine 10 is an active-site residue. An ATP-binding site is contributed by 94–104 (PVAAGLAGGSS). Residue aspartate 136 is part of the active site.

Belongs to the GHMP kinase family. IspE subfamily.

It catalyses the reaction 4-CDP-2-C-methyl-D-erythritol + ATP = 4-CDP-2-C-methyl-D-erythritol 2-phosphate + ADP + H(+). The protein operates within isoprenoid biosynthesis; isopentenyl diphosphate biosynthesis via DXP pathway; isopentenyl diphosphate from 1-deoxy-D-xylulose 5-phosphate: step 3/6. Its function is as follows. Catalyzes the phosphorylation of the position 2 hydroxy group of 4-diphosphocytidyl-2C-methyl-D-erythritol. This chain is 4-diphosphocytidyl-2-C-methyl-D-erythritol kinase, found in Bacillus anthracis (strain CDC 684 / NRRL 3495).